The chain runs to 344 residues: tRNA N6-adenosine threonylcarbamoyltransferase (344 aa).

Histidine 111 and histidine 115 together coordinate Fe cation. Substrate is bound by residues 133 to 137 (VVSGG), aspartate 166, glycine 179, aspartate 183, and asparagine 270. Residue aspartate 298 coordinates Fe cation.

This sequence belongs to the KAE1 / TsaD family. Fe(2+) is required as a cofactor.

Its subcellular location is the cytoplasm. The enzyme catalyses L-threonylcarbamoyladenylate + adenosine(37) in tRNA = N(6)-L-threonylcarbamoyladenosine(37) in tRNA + AMP + H(+). In terms of biological role, required for the formation of a threonylcarbamoyl group on adenosine at position 37 (t(6)A37) in tRNAs that read codons beginning with adenine. Is involved in the transfer of the threonylcarbamoyl moiety of threonylcarbamoyl-AMP (TC-AMP) to the N6 group of A37, together with TsaE and TsaB. TsaD likely plays a direct catalytic role in this reaction. The sequence is that of tRNA N6-adenosine threonylcarbamoyltransferase from Persephonella marina (strain DSM 14350 / EX-H1).